A 613-amino-acid chain; its full sequence is Proteasome-associated ATPase (613 aa).

A disordered region spans residues 1–29 (MSESERSEGFPEGFAGAGSGSLSSEDAAE). The stretch at 23–100 (SSEDAAELEA…LREEVDRLGQ (78 aa)) forms a coiled coil. 300–305 (GCGKTL) serves as a coordination point for ATP. Residue lysine 595 forms an Isoglutamyl lysine isopeptide (Lys-Gln) (interchain with Q-Cter in protein Pup) linkage. The segment at 612 to 613 (YL) is docks into pockets in the proteasome alpha-ring.

The protein belongs to the AAA ATPase family. In terms of assembly, homohexamer. Assembles into a hexameric ring structure that caps the 20S proteasome core. Strongly interacts with the prokaryotic ubiquitin-like protein Pup through a hydrophobic interface; the interacting region of ARC lies in its N-terminal coiled-coil domain. There is one Pup binding site per ARC hexamer ring. Upon ATP-binding, the C-terminus of ARC interacts with the alpha-rings of the proteasome core, possibly by binding to the intersubunit pockets.

It functions in the pathway protein degradation; proteasomal Pup-dependent pathway. In terms of biological role, ATPase which is responsible for recognizing, binding, unfolding and translocation of pupylated proteins into the bacterial 20S proteasome core particle. May be essential for opening the gate of the 20S proteasome via an interaction with its C-terminus, thereby allowing substrate entry and access to the site of proteolysis. Thus, the C-termini of the proteasomal ATPase may function like a 'key in a lock' to induce gate opening and therefore regulate proteolysis. In Mycolicibacterium smegmatis (strain ATCC 700084 / mc(2)155) (Mycobacterium smegmatis), this protein is Proteasome-associated ATPase.